Consider the following 351-residue polypeptide: MEEAETDATENKRASEAKRASAMLPPPPPPISPPALIPAPAAGEEGPASLAQAGAPGCSRSRPPELEPERSLGRLRGRFEDYDEELEEDEEMEEEEEEEEEMSHFSLRLESGRADSEDEEERLINLVELTPYILCSICKGYLIDATTITECLHTFCKSCIVRHFYYSNRCPKCNIVVHQTQPLYNIRLDRQLQDIVYKLVVNLEEREKKQMHDFYKERGLEVPKPAVPQPVPASKGRTKKALESVFRIPPELDVSLLLEFIGANEDTGHFKPLEKKFVRVSGEATIGHVEKFLRRKMGLDPACQVDIICGDHLLERYQTLREIRRAIGDTAMQDGLLVLHYGLVVSPLKIT.

Residues 1–114 are disordered; that stretch reads MEEAETDATE…FSLRLESGRA (114 aa). A compositionally biased stretch (basic and acidic residues) spans 9–19; the sequence is TENKRASEAKR. Over residues 24–37 the composition is skewed to pro residues; the sequence is LPPPPPPISPPALI. Phosphoserine is present on Ser32. Low complexity predominate over residues 38 to 51; it reads PAPAAGEEGPASLA. Residues 62–80 are compositionally biased toward basic and acidic residues; it reads RPPELEPERSLGRLRGRFE. The stretch at 69 to 110 forms a coiled coil; sequence ERSLGRLRGRFEDYDEELEEDEEMEEEEEEEEEMSHFSLRLE. Acidic residues predominate over residues 81 to 101; it reads DYDEELEEDEEMEEEEEEEEE. Residue Ser116 is modified to Phosphoserine. The RING-type zinc-finger motif lies at 135 to 174; sequence CSICKGYLIDATTITECLHTFCKSCIVRHFYYSNRCPKCN. Residues Lys224 and Lys235 each participate in a glycyl lysine isopeptide (Lys-Gly) (interchain with G-Cter in SUMO2) cross-link.

Component of a PRC1-like complex. Interacts with BMI1/PCGF4, RING1 and RNF2. Interacts with KDM5D. Interacts with CBX4, CBX6, CBX7 and CBX8. Post-translationally, phosphorylated during mitosis.

Its subcellular location is the nucleus. In terms of biological role, transcriptional repressor. May modulate the levels of histone H3K4Me3 by activating KDM5D histone demethylase. Component of a Polycomb group (PcG) multiprotein PRC1-like complex, a complex class required to maintain the transcriptionally repressive state of many genes, including Hox genes, throughout development. PcG PRC1 complex acts via chromatin remodeling and modification of histones; it mediates monoubiquitination of histone H2A 'Lys-119', rendering chromatin heritably changed in its expressibility. Within the PRC1-like complex, regulates RNF2 ubiquitin ligase activity. The chain is Polycomb group RING finger protein 6 (Pcgf6) from Rattus norvegicus (Rat).